Reading from the N-terminus, the 210-residue chain is HTH-type transcriptional repressor FabR (210 aa).

Positions Lys10–Leu70 constitute an HTH tetR-type domain. A DNA-binding region (H-T-H motif) is located at residues Ser33–Phe52.

As to quaternary structure, homodimer.

It localises to the cytoplasm. Its function is as follows. Represses the transcription of fabB, involved in unsaturated fatty acid (UFA) biosynthesis. By controlling UFA production, FabR directly influences the physical properties of the membrane bilayer. In Citrobacter koseri (strain ATCC BAA-895 / CDC 4225-83 / SGSC4696), this protein is HTH-type transcriptional repressor FabR.